Consider the following 103-residue polypeptide: Small ribosomal subunit protein uS10 (103 aa).

The protein belongs to the universal ribosomal protein uS10 family. As to quaternary structure, part of the 30S ribosomal subunit.

In terms of biological role, involved in the binding of tRNA to the ribosomes. This is Small ribosomal subunit protein uS10 from Alcanivorax borkumensis (strain ATCC 700651 / DSM 11573 / NCIMB 13689 / SK2).